The chain runs to 276 residues: Expansin-like A3 (276 aa).

An N-terminal signal peptide occupies residues 1–28; it reads MAVLLSILSSSFLLLLAASSSSTPRASA. Residues 52–158 enclose the Expansin-like EG45 domain; that stretch reads GGGCGYGAMA…RRIPCDYKDK (107 aa). N-linked (GlcNAc...) asparagine glycans are attached at residues N115 and N159. The region spanning 172–255 is the Expansin-like CBD domain; the sequence is NNLVIKFLYQ…NWQPGQVYDT (84 aa).

This sequence belongs to the expansin family. Expansin-like A subfamily.

It is found in the secreted. The polypeptide is Expansin-like A3 (EXLA3) (Oryza sativa subsp. japonica (Rice)).